Here is a 397-residue protein sequence, read N- to C-terminus: Elongation factor Tu (397 aa).

A tr-type G domain is found at 10–207; it reads KPHVNIGTIG…AVDESIPEPV (198 aa). Positions 19–26 are G1; sequence GHVDHGKT. 19–26 contributes to the GTP binding site; that stretch reads GHVDHGKT. Thr-26 is a binding site for Mg(2+). Residues 63-67 are G2; sequence GITIN. The G3 stretch occupies residues 84–87; it reads DAPG. Residues 84–88 and 139–142 contribute to the GTP site; these read DAPGH and NKSD. Positions 139–142 are G4; that stretch reads NKSD. Residues 177–179 are G5; it reads SGL.

This sequence belongs to the TRAFAC class translation factor GTPase superfamily. Classic translation factor GTPase family. EF-Tu/EF-1A subfamily. In terms of assembly, monomer.

It localises to the cytoplasm. It catalyses the reaction GTP + H2O = GDP + phosphate + H(+). Functionally, GTP hydrolase that promotes the GTP-dependent binding of aminoacyl-tRNA to the A-site of ribosomes during protein biosynthesis. This chain is Elongation factor Tu, found in Clavibacter michiganensis subsp. michiganensis (strain NCPPB 382).